A 95-amino-acid polypeptide reads, in one-letter code: UPF0381 protein HI_0400 (95 aa).

The protein belongs to the UPF0381 family.

The sequence is that of UPF0381 protein HI_0400 from Haemophilus influenzae (strain ATCC 51907 / DSM 11121 / KW20 / Rd).